Consider the following 589-residue polypeptide: Parathyroid hormone/parathyroid hormone-related peptide receptor (589 aa).

Residues 1–28 form the signal peptide; the sequence is MGAARIAPGLALLLCCPVLSSAYALVDA. Residues 29–188 lie on the Extracellular side of the membrane; that stretch reads DDVMTKEEQI…REREVFDRLG (160 aa). 3 disulfides stabilise this stretch: Cys-48–Cys-117, Cys-108–Cys-148, and Cys-131–Cys-170. Positions 64–105 are disordered; the sequence is ESDKGWASASTSGKPKKEKPSGKLHPESEEDKEVPTGSRPRG. Residues 81 to 90 are compositionally biased toward basic and acidic residues; sequence EKPSGKLHPE. N-linked (GlcNAc...) asparagine glycosylation is found at Asn-151, Asn-161, Asn-166, and Asn-176. A helical transmembrane segment spans residues 189–209; sequence MIYTVGYSVSLASLTVAVLIL. The Cytoplasmic portion of the chain corresponds to 210-223; sequence AYFRRLHCTRNYIH. A helical membrane pass occupies residues 224 to 244; the sequence is MHLFLSFMLRAVSIFVKDAVL. Residues 245-294 are Extracellular-facing; it reads YSGTALDEAERLTEEELRAIAQAPPPPAAAAGYVGCRVAVTFFLYFLATN. A helical transmembrane segment spans residues 295 to 315; the sequence is YYWILVEGLYLHSLIFMAFFS. Residues 316-318 lie on the Cytoplasmic side of the membrane; that stretch reads EKK. Residues 319-339 traverse the membrane as a helical segment; it reads YLWGFTVFGWGLPAIFVAVWV. Residues 340–360 are Extracellular-facing; it reads SVRATLANTGCWDLSSGNKKW. A helical transmembrane segment spans residues 361–381; the sequence is IIQVPILASIVLNFILFINIV. At 382–404 the chain is on the cytoplasmic side; that stretch reads RVLATKLRETNAGRCDTRQQYRK. A helical membrane pass occupies residues 405–425; it reads LLKSTLVLMPLFGVHYIVFMA. Residues 426–439 are Extracellular-facing; it reads TPYTEVSGTLWQVQ. The helical transmembrane segment at 440–460 threads the bilayer; it reads MHYEMLFNSFQGFFVAIIYCF. Residues 461-589 lie on the Cytoplasmic side of the membrane; it reads CNGEVQAEIK…LLQEEWETVM (129 aa). The Important for interaction with G proteins signature appears at 473–476; the sequence is WSRW. Residues 524-549 are disordered; it reads AATTNGHPPLPGHTKSGSPALQATPP. Thr-547 carries the phosphothreonine modification.

Belongs to the G-protein coupled receptor 2 family. Homodimer in the absence of bound ligand. Peptide hormone binding leads to dissociation of the homodimer. Post-translationally, N-glycosylated.

It is found in the cell membrane. Its function is as follows. G-protein-coupled receptor for parathyroid hormone (PTH) and for parathyroid hormone-related peptide (PTHLH). Ligand binding causes a conformation change that triggers signaling via guanine nucleotide-binding proteins (G proteins) and modulates the activity of downstream effectors, such as adenylate cyclase (cAMP). PTH1R is coupled to G(s) G alpha proteins and mediates activation of adenylate cyclase activity. PTHLH dissociates from PTH1R more rapidly than PTH; as consequence, the cAMP response induced by PTHLH decays faster than the response induced by PTH. This Bos taurus (Bovine) protein is Parathyroid hormone/parathyroid hormone-related peptide receptor (PTH1R).